The following is a 51-amino-acid chain: Small ribosomal subunit protein eS31 (51 aa).

Zn(2+)-binding residues include C21, C24, C39, and C42. The C4-type zinc finger occupies 21–42; sequence CPRCGPGVFLAEHEDRFSCGRC.

It belongs to the eukaryotic ribosomal protein eS31 family. Part of the 30S ribosomal subunit. The cofactor is Zn(2+).

This is Small ribosomal subunit protein eS31 from Picrophilus torridus (strain ATCC 700027 / DSM 9790 / JCM 10055 / NBRC 100828 / KAW 2/3).